Here is a 758-residue protein sequence, read N- to C-terminus: 5-methyltetrahydropteroyltriglutamate--homocysteine methyltransferase (758 aa).

Residues 16 to 19 and Lys116 contribute to the 5-methyltetrahydropteroyltri-L-glutamate site; that span reads RELK. L-homocysteine-binding positions include 436 to 438 and Glu489; that span reads IGS. Residues 436 to 438 and Glu489 contribute to the L-methionine site; that span reads IGS. 5-methyltetrahydropteroyltri-L-glutamate contacts are provided by residues 520–521 and Trp566; that span reads RC. Asp604 is an L-homocysteine binding site. Residue Asp604 coordinates L-methionine. Glu610 serves as a coordination point for 5-methyltetrahydropteroyltri-L-glutamate. Zn(2+) is bound by residues His646, Cys648, and Glu670. His699 functions as the Proton donor in the catalytic mechanism. Cys731 serves as a coordination point for Zn(2+).

The protein belongs to the vitamin-B12 independent methionine synthase family. The cofactor is Zn(2+).

It carries out the reaction 5-methyltetrahydropteroyltri-L-glutamate + L-homocysteine = tetrahydropteroyltri-L-glutamate + L-methionine. It participates in amino-acid biosynthesis; L-methionine biosynthesis via de novo pathway; L-methionine from L-homocysteine (MetE route): step 1/1. Functionally, catalyzes the transfer of a methyl group from 5-methyltetrahydrofolate to homocysteine resulting in methionine formation. This is 5-methyltetrahydropteroyltriglutamate--homocysteine methyltransferase from Xylella fastidiosa (strain M12).